Consider the following 414-residue polypeptide: Ornithine aminotransferase (414 aa).

A disulfide bridge connects residues C154 and C163. K262 carries the post-translational modification N6-(pyridoxal phosphate)lysine.

It belongs to the class-III pyridoxal-phosphate-dependent aminotransferase family. In terms of assembly, homodimer. Pyridoxal 5'-phosphate is required as a cofactor. The disulfide bond between Cys-154 and Cys-163 is reduced by TRX1 which increases OAT catalytic activity.

It is found in the cytoplasm. It carries out the reaction a 2-oxocarboxylate + L-ornithine = L-glutamate 5-semialdehyde + an L-alpha-amino acid. The catalysed reaction is L-ornithine + 2-oxoglutarate = L-glutamate 5-semialdehyde + L-glutamate. It participates in amino-acid biosynthesis; L-proline biosynthesis; L-glutamate 5-semialdehyde from L-ornithine: step 1/1. With respect to regulation, unlike for mammalian OATs, activity is increased by TRX1-mediated reduction of the disulfide bond between Cys-154 and Cys-163. Binding to TRX1 may also induce conformational changes that facilitate substrate binding. Its function is as follows. Catalyzes the transamination of alpha-ketoglutarate with ornithine or N-acetylornithine and of glutamate-5-semialdehyde with glutamate and alanine. The protein is Ornithine aminotransferase of Plasmodium chabaudi chabaudi.